A 938-amino-acid polypeptide reads, in one-letter code: Isoleucine--tRNA ligase (938 aa).

The short motif at 58 to 68 (PYANGSIHIGH) is the 'HIGH' region element. K183 carries the post-translational modification N6-acetyllysine. E561 contributes to the L-isoleucyl-5'-AMP binding site. Residues 602–606 (KMSKS) carry the 'KMSKS' region motif. K605 lines the ATP pocket. 4 residues coordinate Zn(2+): C901, C904, C921, and C924.

The protein belongs to the class-I aminoacyl-tRNA synthetase family. IleS type 1 subfamily. Monomer. Zn(2+) is required as a cofactor.

It is found in the cytoplasm. The catalysed reaction is tRNA(Ile) + L-isoleucine + ATP = L-isoleucyl-tRNA(Ile) + AMP + diphosphate. Catalyzes the attachment of isoleucine to tRNA(Ile). As IleRS can inadvertently accommodate and process structurally similar amino acids such as valine, to avoid such errors it has two additional distinct tRNA(Ile)-dependent editing activities. One activity is designated as 'pretransfer' editing and involves the hydrolysis of activated Val-AMP. The other activity is designated 'posttransfer' editing and involves deacylation of mischarged Val-tRNA(Ile). The protein is Isoleucine--tRNA ligase of Escherichia fergusonii (strain ATCC 35469 / DSM 13698 / CCUG 18766 / IAM 14443 / JCM 21226 / LMG 7866 / NBRC 102419 / NCTC 12128 / CDC 0568-73).